Reading from the N-terminus, the 195-residue chain is Pyridoxal 5'-phosphate synthase subunit PdxT (195 aa).

46-48 lines the L-glutamine pocket; the sequence is GES. The Nucleophile role is filled by Cys78. L-glutamine-binding positions include Arg107 and 136–137; that span reads IR. Residues His173 and Glu175 each act as charge relay system in the active site.

This sequence belongs to the glutaminase PdxT/SNO family. As to quaternary structure, in the presence of PdxS, forms a dodecamer of heterodimers. Only shows activity in the heterodimer.

The catalysed reaction is aldehydo-D-ribose 5-phosphate + D-glyceraldehyde 3-phosphate + L-glutamine = pyridoxal 5'-phosphate + L-glutamate + phosphate + 3 H2O + H(+). The enzyme catalyses L-glutamine + H2O = L-glutamate + NH4(+). It functions in the pathway cofactor biosynthesis; pyridoxal 5'-phosphate biosynthesis. In terms of biological role, catalyzes the hydrolysis of glutamine to glutamate and ammonia as part of the biosynthesis of pyridoxal 5'-phosphate. The resulting ammonia molecule is channeled to the active site of PdxS. This is Pyridoxal 5'-phosphate synthase subunit PdxT from Dehalococcoides mccartyi (strain ATCC BAA-2266 / KCTC 15142 / 195) (Dehalococcoides ethenogenes (strain 195)).